A 1331-amino-acid polypeptide reads, in one-letter code: ABC multidrug transporter MDR2 (1331 aa).

Composition is skewed to basic and acidic residues over residues 1-20 (MVEVSEKPNTQDDGVSKQEN) and 31-41 (SDKEKVAKKGN). A disordered region spans residues 1 to 51 (MVEVSEKPNTQDDGVSKQENRNPASSSSSTSDKEKVAKKGNSDATKSSTPE). 4 helical membrane-spanning segments follow: residues 93 to 113 (MIFLAIVSLASIAAGAALPLF), 147 to 167 (YFVYLGIAQFILLYVSTVGFI), 219 to 239 (KVGLTLTALSTFFSAFIIGYV), and 242 to 262 (WKLALICSSTIVAMILVMGGI). Residues 97-387 (AIVSLASIAA…VAPNTQAFAS (291 aa)) form the ABC transmembrane type-1 1 domain. Asparagine 293 carries an N-linked (GlcNAc...) asparagine glycan. Helical transmembrane passes span 325–345 (LGIMFGSMMAIMYSNYGLGFW) and 358–378 (LSAIVNILLAIVIGSFSIGNV). One can recognise an ABC transporter 1 domain in the interval 422–667 (IEFRGIKHIY…KGTYLQLVEA (246 aa)). 457–464 (GPSGSGKS) is a binding site for ATP. Asparagine 529 and asparagine 737 each carry an N-linked (GlcNAc...) asparagine glycan. A run of 2 helical transmembrane segments spans residues 762 to 782 (LCGFFFAVLSGAGQPVQSVFF) and 810 to 830 (FLMLGLVQLVTQSAQGVIFAI). In terms of domain architecture, ABC transmembrane type-1 2 spans 764–1051 (GFFFAVLSGA…VFSFSPDMGK (288 aa)). The N-linked (GlcNAc...) asparagine glycan is linked to asparagine 860. 4 consecutive transmembrane segments (helical) span residues 884 to 904 (LGTILMVSTTLIVALTVALAF), 910 to 930 (LVCISTVPVLLLCGFYRFWIL), 995 to 1015 (ASQSFSFFCLALGFWYGGGLL), and 1025 to 1045 (FFLCISCVIFGSQSAGIVFSF). The region spanning 1086-1324 (IEFRDVHFRY…KGRYYELVHM (239 aa)) is the ABC transporter 2 domain. Asparagine 1108 carries N-linked (GlcNAc...) asparagine glycosylation. Residue 1121–1128 (GPSGCGKS) participates in ATP binding.

It belongs to the ABC transporter superfamily. ABCB family. Multidrug resistance exporter (TC 3.A.1.201) subfamily.

The protein localises to the cell membrane. The enzyme catalyses itraconazole(in) + ATP + H2O = itraconazole(out) + ADP + phosphate + H(+). Its function is as follows. Pleiotropic ABC efflux transporter that may be involved in the modulation susceptibility to a wide range of unrelated cytotoxic compounds. The sequence is that of ABC multidrug transporter MDR2 from Trichophyton equinum (strain ATCC MYA-4606 / CBS 127.97) (Horse ringworm fungus).